Consider the following 352-residue polypeptide: MGGLYSEYLNPEKVLEHYNYTKETLDMQETTSRKVASAFIIILCCAIVVENLLVLIAVARNSKFHSAMYLFLGNLAASDLLAGVAFVANTLLSGHVTLSLTPVQWFAREGSAFITLSASVFSLLAIAIERQVALAKVKLYGSDKSCRMLMLIGASWLISLILGGLPILGWNCLNQLEACSTVLPLYAKHYVLCVVTIFSVILLAIVALYVRIYFVVRSSHADVAGPQTLALLKTVTIVLGVFIICWLPAFSILLLDSTCPVRACPVLYKAHYFFAFATLNSLLNPVIYTWRSRDLRREVLRPLQCWRRGKGVTGRRGGNPGHRLLPLRSSSSLERGMHMPTSPTFLEGNTVV.

Topologically, residues 1 to 34 (MGGLYSEYLNPEKVLEHYNYTKETLDMQETTSRK) are extracellular. N19 carries N-linked (GlcNAc...) asparagine glycosylation. The chain crosses the membrane as a helical span at residues 35–59 (VASAFIIILCCAIVVENLLVLIAVA). The Cytoplasmic segment spans residues 60–66 (RNSKFHS). The helical transmembrane segment at 67 to 95 (AMYLFLGNLAASDLLAGVAFVANTLLSGH) threads the bilayer. Over 96-109 (VTLSLTPVQWFARE) the chain is Extracellular. A helical transmembrane segment spans residues 110 to 128 (GSAFITLSASVFSLLAIAI). Residues 129-147 (ERQVALAKVKLYGSDKSCR) are Cytoplasmic-facing. Residues 148–173 (MLMLIGASWLISLILGGLPILGWNCL) form a helical membrane-spanning segment. Residues 174–189 (NQLEACSTVLPLYAKH) lie on the Extracellular side of the membrane. The helical transmembrane segment at 190–210 (YVLCVVTIFSVILLAIVALYV) threads the bilayer. The Cytoplasmic segment spans residues 211–233 (RIYFVVRSSHADVAGPQTLALLK). A helical membrane pass occupies residues 234-255 (TVTIVLGVFIICWLPAFSILLL). Over 256 to 271 (DSTCPVRACPVLYKAH) the chain is Extracellular. Residues 272–292 (YFFAFATLNSLLNPVIYTWRS) traverse the membrane as a helical segment. The Cytoplasmic segment spans residues 293-352 (RDLRREVLRPLQCWRRGKGVTGRRGGNPGHRLLPLRSSSSLERGMHMPTSPTFLEGNTVV). Residue C305 is the site of S-palmitoyl cysteine attachment. A disordered region spans residues 333–352 (LERGMHMPTSPTFLEGNTVV).

Belongs to the G-protein coupled receptor 1 family. As to expression, most abundant in heart and lung; low, but clearly observed in kidney, liver and thymus; much lower but detectable in brain, testis, stomach and intestine. Not significantly detected in any of the sections of embryonic day (E) 14-18, except in embryonic brain.

The protein resides in the cell membrane. Receptor for the lysosphingolipid sphingosine 1-phosphate (S1P). S1P is a bioactive lysophospholipid that elicits diverse physiological effects on most types of cells and tissues. Receptor for the chemokine-like protein FAM19A5. Mediates the inhibitory effect of FAM19A5 on vascular smooth muscle cell proliferation and migration. In lymphoid follicles, couples the binding of S1P to the activation of GNA13 and downstream inhibition of AKT activation leading to suppression of germinal center (GC) B cell growth and migration outside the GC niche. This Mus musculus (Mouse) protein is Sphingosine 1-phosphate receptor 2 (S1pr2).